The following is a 509-amino-acid chain: Maturase K (509 aa).

The protein belongs to the intron maturase 2 family. MatK subfamily.

Its subcellular location is the plastid. It localises to the chloroplast. Usually encoded in the trnK tRNA gene intron. Probably assists in splicing its own and other chloroplast group II introns. This chain is Maturase K, found in Hottonia palustris (Water-violet).